Consider the following 155-residue polypeptide: SsrA-binding protein (155 aa).

Belongs to the SmpB family.

The protein resides in the cytoplasm. In terms of biological role, required for rescue of stalled ribosomes mediated by trans-translation. Binds to transfer-messenger RNA (tmRNA), required for stable association of tmRNA with ribosomes. tmRNA and SmpB together mimic tRNA shape, replacing the anticodon stem-loop with SmpB. tmRNA is encoded by the ssrA gene; the 2 termini fold to resemble tRNA(Ala) and it encodes a 'tag peptide', a short internal open reading frame. During trans-translation Ala-aminoacylated tmRNA acts like a tRNA, entering the A-site of stalled ribosomes, displacing the stalled mRNA. The ribosome then switches to translate the ORF on the tmRNA; the nascent peptide is terminated with the 'tag peptide' encoded by the tmRNA and targeted for degradation. The ribosome is freed to recommence translation, which seems to be the essential function of trans-translation. In Streptococcus pyogenes serotype M4 (strain MGAS10750), this protein is SsrA-binding protein.